The sequence spans 140 residues: Midkine (140 aa).

Residues 1-22 form the signal peptide; sequence MQHRGFFLLALLALLVVTSAVA. Disulfide bonds link Cys-34/Cys-58, Cys-42/Cys-67, Cys-49/Cys-71, Cys-81/Cys-113, and Cys-91/Cys-123.

This sequence belongs to the pleiotrophin family. In terms of assembly, homodimer. Interacts with ALK. Interacts with LRP1; promotes neuronal survival. Interacts with LRP2. Interacts with NCAM1. Interacts (via C-terminal) with PTPRZ1 (via chondroitin sulfate chains); this interaction is inhibited by PTN; this interaction promotes neuronal migration. Interacts with NCL; this interaction promotes NCL clustering and lateral movements of this complex into lipid rafts leading to MDK internalization. Interacts with LRP6 and LRP8: this interaction is calcium dependent. Interacts with ITGA4. Interacts with ITGA6. Interacts with ITGB1. Interacts with ITGA4:ITGB1 complex; this interaction mediates MDK-induced osteoblast cells migration through PXN phosphorylation. Interacts with ITGA6:ITGB1 complex; this interaction mediates MDK-induced neurite outgrowth. Interacts with NOTCH2; this interactio mediates a nuclear accumulation of NOTCH2 and therefore activation of NOTCH2 signaling leading to interaction between HES1 and STAT3. Interacts with GPC2 (via heparan sulfate chain); this interaction is inhibited by heparin followed by chondroitin sulfate E; this interaction induces GPC2 clustering through heparan sulfate chain; this interaction induces neuronal cell adhesion and neurite outgrowth. Interacts with SDC3; this interaction induces SDC3 clustering; this interaction induces neuronal cell adhesion and neurite outgrowth. Interacts with SDC1. Interacts with CSPG5; this interaction promotes elongation of oligodendroglial precursor-like cells. As to expression, expressed in the follicular epithelium and granulosa cells of the ovary.

Its subcellular location is the secreted. Functionally, secreted protein that functions as a cytokine and growth factor and mediates its signal through cell-surface proteoglycan and non-proteoglycan receptors. Binds cell-surface proteoglycan receptors via their chondroitin sulfate (CS) groups. Thereby regulates many processes like inflammatory response, cell proliferation, cell adhesion, cell growth, cell survival, tissue regeneration, cell differentiation and cell migration. Participates in inflammatory processes by exerting two different activities. Firstly, mediates neutrophils and macrophages recruitment to the sites of inflammation both by direct action by cooperating namely with ITGB2 via LRP1 and by inducing chemokine expression. This inflammation can be accompanied by epithelial cell survival and smooth muscle cell migration after renal and vessel damage, respectively. Secondly, suppresses the development of tolerogenic dendric cells thereby inhibiting the differentiation of regulatory T cells and also promote T cell expansion through NFAT signaling and Th1 cell differentiation. Promotes tissue regeneration after injury or trauma. After heart damage negatively regulates the recruitment of inflammatory cells and mediates cell survival through activation of anti-apoptotic signaling pathways via MAPKs and AKT pathways through the activation of angiogenesis. Also facilitates liver regeneration as well as bone repair by recruiting macrophage at trauma site and by promoting cartilage development by facilitating chondrocyte differentiation. Plays a role in brain by promoting neural precursor cells survival and growth through interaction with heparan sulfate proteoglycans. Binds PTPRZ1 and promotes neuronal migration and embryonic neurons survival. Binds SDC3 or GPC2 and mediates neurite outgrowth and cell adhesion. Binds chondroitin sulfate E and heparin leading to inhibition of neuronal cell adhesion induced by binding with GPC2. Binds CSPG5 and promotes elongation of oligodendroglial precursor-like cells. Also binds ITGA6:ITGB1 complex; this interaction mediates MDK-induced neurite outgrowth. Binds LRP1; promotes neuronal survival. Binds ITGA4:ITGB1 complex; this interaction mediates MDK-induced osteoblast cells migration through PXN phosphorylation. Binds anaplastic lymphoma kinase (ALK) which induces ALK activation and subsequent phosphorylation of the insulin receptor substrate (IRS1), followed by the activation of mitogen-activated protein kinase (MAPK) and PI3-kinase, and the induction of cell proliferation. Promotes epithelial to mesenchymal transition through interaction with NOTCH2. During arteriogenesis, plays a role in vascular endothelial cell proliferation by inducing VEGFA expression and release which in turn induces nitric oxide synthase expression. Moreover activates vasodilation through nitric oxide synthase activation. Negatively regulates bone formation in response to mechanical load by inhibiting Wnt/beta-catenin signaling in osteoblasts. In addition plays a role in hippocampal development, working memory, auditory response, early fetal adrenal gland development and the female reproductive system. This Mus musculus (Mouse) protein is Midkine.